Consider the following 158-residue polypeptide: 6,7-dimethyl-8-ribityllumazine synthase (158 aa).

5-amino-6-(D-ribitylamino)uracil is bound by residues F22, 56–58, and 80–82; these read ALE and VVI. A (2S)-2-hydroxy-3-oxobutyl phosphate-binding site is contributed by 85 to 86; sequence ET. H88 (proton donor) is an active-site residue. N113 is a 5-amino-6-(D-ribitylamino)uracil binding site. R127 is a binding site for (2S)-2-hydroxy-3-oxobutyl phosphate.

This sequence belongs to the DMRL synthase family.

It carries out the reaction (2S)-2-hydroxy-3-oxobutyl phosphate + 5-amino-6-(D-ribitylamino)uracil = 6,7-dimethyl-8-(1-D-ribityl)lumazine + phosphate + 2 H2O + H(+). It functions in the pathway cofactor biosynthesis; riboflavin biosynthesis; riboflavin from 2-hydroxy-3-oxobutyl phosphate and 5-amino-6-(D-ribitylamino)uracil: step 1/2. Functionally, catalyzes the formation of 6,7-dimethyl-8-ribityllumazine by condensation of 5-amino-6-(D-ribitylamino)uracil with 3,4-dihydroxy-2-butanone 4-phosphate. This is the penultimate step in the biosynthesis of riboflavin. In Neisseria meningitidis serogroup C (strain 053442), this protein is 6,7-dimethyl-8-ribityllumazine synthase.